Reading from the N-terminus, the 236-residue chain is Leucyl/phenylalanyl-tRNA--protein transferase (236 aa).

Belongs to the L/F-transferase family.

Its subcellular location is the cytoplasm. It catalyses the reaction N-terminal L-lysyl-[protein] + L-leucyl-tRNA(Leu) = N-terminal L-leucyl-L-lysyl-[protein] + tRNA(Leu) + H(+). The enzyme catalyses N-terminal L-arginyl-[protein] + L-leucyl-tRNA(Leu) = N-terminal L-leucyl-L-arginyl-[protein] + tRNA(Leu) + H(+). The catalysed reaction is L-phenylalanyl-tRNA(Phe) + an N-terminal L-alpha-aminoacyl-[protein] = an N-terminal L-phenylalanyl-L-alpha-aminoacyl-[protein] + tRNA(Phe). In terms of biological role, functions in the N-end rule pathway of protein degradation where it conjugates Leu, Phe and, less efficiently, Met from aminoacyl-tRNAs to the N-termini of proteins containing an N-terminal arginine or lysine. In Shewanella sp. (strain MR-4), this protein is Leucyl/phenylalanyl-tRNA--protein transferase.